Here is a 631-residue protein sequence, read N- to C-terminus: Probable protein phosphatase 2C 31 (631 aa).

2 disordered regions span residues 119 to 142 (GPLH…SDRF) and 205 to 231 (LSGR…PKGN). The segment covering 131–140 (ASGSASTASD) has biased composition (polar residues). One can recognise a PPM-type phosphatase domain in the interval 221-622 (DGDYRSTPKG…DDVSIIVMSF (402 aa)). Positions 261 and 262 each coordinate Mn(2+). The tract at residues 324 to 347 (GGDDDPDAERKAKRGRIERNADDD) is disordered. The Mn(2+) site is built by Asp-550 and Asp-613.

Belongs to the PP2C family. The cofactor is Mg(2+). It depends on Mn(2+) as a cofactor.

It carries out the reaction O-phospho-L-seryl-[protein] + H2O = L-seryl-[protein] + phosphate. The catalysed reaction is O-phospho-L-threonyl-[protein] + H2O = L-threonyl-[protein] + phosphate. The chain is Probable protein phosphatase 2C 31 from Oryza sativa subsp. japonica (Rice).